Here is a 314-residue protein sequence, read N- to C-terminus: MLENYKHTTVLLDEAVNGLNIRSGGIYIDGTFGRGGHSRLILSQLGPEGRLLAIDRDPQAIEAAKAIDDPRFSIIHGPFSAMAEYVAELGLTGQIDGVLLDLGVSSPQLDDPERGFSFMRDGPLDMRMDPTRGLSAAEWLMKAEADDIVWVLKTFGEERFAKRIARAIVERNRTEPMTRTKELAELIAAASPVREKHKHPATRSFQAIRIYINSELEEIERALEGALSVLAPQGRLSVISFHSLEDRIVKRFIRHQSRGPQVPAGLPLTEEQLRSQGGQTLKAVGKKLMPSEAEVAENPRARSSVLRFAERLPA.

S-adenosyl-L-methionine is bound by residues glycine 35–histidine 37, aspartate 55, phenylalanine 79, aspartate 101, and glutamine 108.

The protein belongs to the methyltransferase superfamily. RsmH family.

It localises to the cytoplasm. The catalysed reaction is cytidine(1402) in 16S rRNA + S-adenosyl-L-methionine = N(4)-methylcytidine(1402) in 16S rRNA + S-adenosyl-L-homocysteine + H(+). Specifically methylates the N4 position of cytidine in position 1402 (C1402) of 16S rRNA. The protein is Ribosomal RNA small subunit methyltransferase H of Pectobacterium carotovorum subsp. carotovorum (strain PC1).